Here is a 228-residue protein sequence, read N- to C-terminus: Tol-Pal system protein TolQ (228 aa).

Transmembrane regions (helical) follow at residues 16 to 36 (IVVQ…WAII), 137 to 157 (VSPY…FMAL), and 172 to 192 (IAEA…AVMA).

This sequence belongs to the ExbB/TolQ family. As to quaternary structure, the Tol-Pal system is composed of five core proteins: the inner membrane proteins TolA, TolQ and TolR, the periplasmic protein TolB and the outer membrane protein Pal. They form a network linking the inner and outer membranes and the peptidoglycan layer.

The protein resides in the cell inner membrane. Part of the Tol-Pal system, which plays a role in outer membrane invagination during cell division and is important for maintaining outer membrane integrity. This Haemophilus influenzae (strain ATCC 51907 / DSM 11121 / KW20 / Rd) protein is Tol-Pal system protein TolQ.